The chain runs to 182 residues: Protein canopy homolog 2 (182 aa).

An N-terminal signal peptide occupies residues Met1–Ala20. Positions Gln24–Leu175 constitute a Saposin B-type domain. Disulfide bonds link Cys28–Cys171, Cys31–Cys164, and Cys86–Cys137. Phosphoserine is present on Ser115. Positions His179–Leu182 match the Prevents secretion from ER motif.

This sequence belongs to the canopy family. As to quaternary structure, interacts with MYLIP/MIR. In terms of tissue distribution, expressed in different tissues. Highest levels are detected in adult placenta, liver and pancreas.

The protein resides in the endoplasmic reticulum. Positive regulator of neurite outgrowth by stabilizing myosin regulatory light chain (MRLC). It prevents MIR-mediated MRLC ubiquitination and its subsequent proteasomal degradation. In Homo sapiens (Human), this protein is Protein canopy homolog 2 (CNPY2).